The following is a 769-amino-acid chain: 4-hydroxybenzoyl-CoA reductase subunit alpha (769 aa).

Mo-molybdopterin cytosine dinucleotide contacts are provided by residues glutamine 214, 244–245 (GF), 522–526 (SSRVT), 650–655 (VGKALN), and 722–725 (KEAS).

The protein belongs to the xanthine dehydrogenase family. As to quaternary structure, heterohexamer of two alpha, two beta and two gamma subunits. Requires Mo-molybdopterin cytosine dinucleotide as cofactor. The N-terminus is blocked.

It carries out the reaction oxidized 2[4Fe-4S]-[ferredoxin] + benzoyl-CoA + H2O = 4-hydroxybenzoyl-CoA + reduced 2[4Fe-4S]-[ferredoxin] + 2 H(+). With respect to regulation, inactivated by low concentrations of cyanide in vitro. Its function is as follows. Component of a complex that catalyzes the reductive dehydroxylation of 4-hydroxybenzoyl-CoA to benzoyl-CoA. Reaction is not reversible. Is a key enzyme in the anaerobic degradation of phenolic compounds. The protein is 4-hydroxybenzoyl-CoA reductase subunit alpha (hcrA) of Thauera aromatica.